The primary structure comprises 126 residues: UPF0325 protein VFMJ11_2099 (126 aa).

This sequence belongs to the UPF0325 family.

This chain is UPF0325 protein VFMJ11_2099, found in Aliivibrio fischeri (strain MJ11) (Vibrio fischeri).